The sequence spans 339 residues: Tetracenomycin polyketide synthesis 8-O-methyl transferase TcmO (339 aa).

S-adenosyl-L-methionine contacts are provided by residues Asp200 and 226-228 (GDF). His246 acts as the Proton acceptor in catalysis.

The protein belongs to the class I-like SAM-binding methyltransferase superfamily. Cation-independent O-methyltransferase family.

The protein operates within antibiotic biosynthesis; tetracenomycin C biosynthesis. The protein is Tetracenomycin polyketide synthesis 8-O-methyl transferase TcmO (tcmO) of Streptomyces glaucescens.